The following is a 122-amino-acid chain: MSSRGFNIKARGLCNNNNGGGGTGAKCGRWNPTVEQVKLLTDLFKAGLRTPSTDQIQKISMELSFYGKIESKNVFYWFQNHKARERQKCRKISTVKFDHRQDTDLSKPRRDNVRRHQLPAKG.

The segment at residues 25–89 (AKCGRWNPTV…NHKARERQKC (65 aa)) is a DNA-binding region (homeobox; WUS-type). Residues 98–111 (DHRQDTDLSKPRRD) are compositionally biased toward basic and acidic residues. A disordered region spans residues 98 to 122 (DHRQDTDLSKPRRDNVRRHQLPAKG). Positions 112 to 122 (NVRRHQLPAKG) are enriched in basic residues.

This sequence belongs to the WUS homeobox family.

It localises to the nucleus. In terms of biological role, potential transcription factor that plays a central role during developmental processes. This Arabidopsis thaliana (Mouse-ear cress) protein is WUSCHEL-related homeobox 7 (WOX7).